Consider the following 1103-residue polypeptide: Voltage-dependent calcium channel subunit alpha-2/delta-1 (1103 aa).

Residues 1–24 (MAAGCLLALTLTLFQSLLIGPSSE) form the signal peptide. The Extracellular segment spans residues 25–1073 (EPFPSAVTIK…VLEDYTDCGG (1049 aa)). Asparagine 92 is a glycosylation site (N-linked (GlcNAc...) asparagine). Phosphoserine is present on serine 119. Residues asparagine 136 and asparagine 184 are each glycosylated (N-linked (GlcNAc...) asparagine). The 178-residue stretch at 253–430 (DMLILVDVSG…INTQEYLDVL (178 aa)) folds into the VWFA domain. A divalent metal cation is bound by residues aspartate 259, serine 261, and serine 263. Residues 259-263 (DVSGS) carry the MIDAS-like motif motif. N-linked (GlcNAc...) asparagine glycosylation is found at asparagine 324, asparagine 348, asparagine 468, asparagine 475, asparagine 604, asparagine 613, asparagine 675, asparagine 781, asparagine 824, asparagine 888, asparagine 895, asparagine 985, and asparagine 998. An intrachain disulfide couples cysteine 404 to cysteine 1059. Residues 446 to 556 (WTNVYLDALE…NIQNPKSQEP (111 aa)) form the Cache domain. The helical transmembrane segment at 1074–1094 (VSGLNPSLWYIIGIQFLLLWL) threads the bilayer. The Cytoplasmic portion of the chain corresponds to 1095 to 1103 (VSGSTHRLL).

It belongs to the calcium channel subunit alpha-2/delta family. In terms of assembly, dimer formed of alpha-2-1 and delta-1 chains; disulfide-linked. Voltage-dependent calcium channels are multisubunit complexes, consisting of alpha-1 (CACNA1), alpha-2 (CACNA2D), beta (CACNB) and delta (CACNA2D) subunits in a 1:1:1:1 ratio. In terms of processing, proteolytically processed into subunits alpha-2-1 and delta-1 that are disulfide-linked. Isoform 1 is expressed in skeletal muscle. Isoform 2 is expressed in the central nervous system. Isoform 2, isoform 4 and isoform 5 are expressed in neuroblastoma cells. Isoform 3, isoform 4 and isoform 5 are expressed in the aorta.

It localises to the membrane. Its subcellular location is the cell membrane. In terms of biological role, the alpha-2/delta subunit of voltage-dependent calcium channels regulates calcium current density and activation/inactivation kinetics of the calcium channel. Plays an important role in excitation-contraction coupling. The chain is Voltage-dependent calcium channel subunit alpha-2/delta-1 (CACNA2D1) from Homo sapiens (Human).